We begin with the raw amino-acid sequence, 1374 residues long: Major capsid protein (1374 aa).

This sequence belongs to the herpesviridae major capsid protein family. In terms of assembly, homomultimer. Makes the hexons and eleven out of twelve pentons. Interacts with triplex proteins 1/TRX1 and 2/TRX2; adjacent capsomers are linked together in groups of three by triplexes, heterotrimeric complexes composed of one molecule of TRX1 and two molecules of TRX2. Interacts with scaffold protein; this interaction allows efficient MCP transport to the host nucleus. Interacts with capsid vertex component 2/CVC2. Interacts with the small capsomere-interacting protein/SCP.

It localises to the virion. The protein resides in the host nucleus. Its function is as follows. Self-assembles to form an icosahedral capsid with a T=16 symmetry, about 200 nm in diameter, and consisting of 150 hexons and 12 pentons (total of 162 capsomers). Hexons form the edges and faces of the capsid and are each composed of six MCP molecules. In contrast, one penton is found at each of the 12 vertices. Eleven of the pentons are MCP pentamers, while the last vertex is occupied by the portal complex. The capsid is surrounded by a layer of proteinaceous material designated the tegument which, in turn, is enclosed in an envelope of host cell-derived lipids containing virus-encoded glycoproteins. The protein is Major capsid protein of Homo sapiens (Human).